Here is a 390-residue protein sequence, read N- to C-terminus: Leu/Ile/Val-binding protein homolog 6 (390 aa).

Positions 1-21 (MKKIALTALAVFSLAASAAYA) are cleaved as a signal peptide.

The protein belongs to the leucine-binding protein family.

Functionally, component of an amino-acid transport system. The chain is Leu/Ile/Val-binding protein homolog 6 from Brucella abortus (strain 2308).